Consider the following 731-residue polypeptide: 1,4-alpha-glucan branching enzyme GlgB (731 aa).

The active-site Nucleophile is the Asp-408. Glu-461 functions as the Proton donor in the catalytic mechanism.

Belongs to the glycosyl hydrolase 13 family. GlgB subfamily. In terms of assembly, monomer.

The enzyme catalyses Transfers a segment of a (1-&gt;4)-alpha-D-glucan chain to a primary hydroxy group in a similar glucan chain.. It participates in glycan biosynthesis; glycogen biosynthesis. In terms of biological role, catalyzes the formation of the alpha-1,6-glucosidic linkages in glycogen by scission of a 1,4-alpha-linked oligosaccharide from growing alpha-1,4-glucan chains and the subsequent attachment of the oligosaccharide to the alpha-1,6 position. This is 1,4-alpha-glucan branching enzyme GlgB from Corynebacterium glutamicum (strain ATCC 13032 / DSM 20300 / JCM 1318 / BCRC 11384 / CCUG 27702 / LMG 3730 / NBRC 12168 / NCIMB 10025 / NRRL B-2784 / 534).